Consider the following 151-residue polypeptide: Large ribosomal subunit protein bL9 (151 aa).

The protein belongs to the bacterial ribosomal protein bL9 family.

Binds to the 23S rRNA. In Mycolicibacterium smegmatis (strain ATCC 700084 / mc(2)155) (Mycobacterium smegmatis), this protein is Large ribosomal subunit protein bL9.